The chain runs to 340 residues: Glycerol-3-phosphate dehydrogenase [NAD(P)+] (340 aa).

Residues S14, F15, R35, and K108 each contribute to the NADPH site. K108 and G136 together coordinate sn-glycerol 3-phosphate. Position 140 (A140) interacts with NADPH. Sn-glycerol 3-phosphate is bound by residues K191, D244, S254, R255, and N256. K191 (proton acceptor) is an active-site residue. An NADPH-binding site is contributed by R255. An NADPH-binding site is contributed by E281.

Belongs to the NAD-dependent glycerol-3-phosphate dehydrogenase family.

The protein localises to the cytoplasm. It carries out the reaction sn-glycerol 3-phosphate + NAD(+) = dihydroxyacetone phosphate + NADH + H(+). The catalysed reaction is sn-glycerol 3-phosphate + NADP(+) = dihydroxyacetone phosphate + NADPH + H(+). Its pathway is membrane lipid metabolism; glycerophospholipid metabolism. Its function is as follows. Catalyzes the reduction of the glycolytic intermediate dihydroxyacetone phosphate (DHAP) to sn-glycerol 3-phosphate (G3P), the key precursor for phospholipid synthesis. The polypeptide is Glycerol-3-phosphate dehydrogenase [NAD(P)+] (Pseudomonas aeruginosa (strain ATCC 15692 / DSM 22644 / CIP 104116 / JCM 14847 / LMG 12228 / 1C / PRS 101 / PAO1)).